Here is a 203-residue protein sequence, read N- to C-terminus: Snake venom metalloproteinase fibrolase (203 aa).

Position 1 is a pyrrolidone carboxylic acid (Q1). The Peptidase M12B domain maps to 7 to 203; that stretch reads RYVQLVIVAD…NNPQCILNKP (197 aa). Disulfide bonds link C118–C198, C158–C182, and C160–C165. H143 contacts Zn(2+). The active site involves E144. Zn(2+) is bound by residues H147 and H153.

This sequence belongs to the venom metalloproteinase (M12B) family. P-I subfamily. Monomer. Zn(2+) serves as cofactor. As to expression, expressed by the venom gland.

The protein localises to the secreted. It carries out the reaction Hydrolysis of 14-Ala-|-Leu-15 in insulin B chain and 413-Lys-|-Leu-414 in alpha-chain of fibrinogen.. With respect to regulation, is inhibited by EDTA, o-phenanthroline and tetraethylenepentamine. Snake venom zinc metalloprotease that exhibits direct fibrinolytic activity. The protein is Snake venom metalloproteinase fibrolase of Agkistrodon contortrix contortrix (Southern copperhead).